The sequence spans 264 residues: DNA repair protein RecO (264 aa).

The protein belongs to the RecO family.

Involved in DNA repair and RecF pathway recombination. This chain is DNA repair protein RecO, found in Leuconostoc citreum (strain KM20).